A 115-amino-acid polypeptide reads, in one-letter code: Meiotically up-regulated gene 42 protein (115 aa).

Its function is as follows. Has a role in meiosis. The chain is Meiotically up-regulated gene 42 protein (mug42) from Schizosaccharomyces pombe (strain 972 / ATCC 24843) (Fission yeast).